A 182-amino-acid chain; its full sequence is Helofensin-3 (182 aa).

The N-terminal stretch at Met-1 to Gly-26 is a signal peptide. The C(6)C(4)C(9)C(6)CC 1; approximate repeat unit spans residues Ala-27–Ala-64. Residues Arg-65 to Gln-101 form a C(6)C(4)C(9)C(6)CC 2; approximate repeat. The stretch at Arg-102–Lys-138 is one C(6)C(4)C(9)C(6)CC 3; approximate repeat. The stretch at Arg-139–Lys-176 is one C(6)C(4)C(9)C(6)CC 4; approximate repeat.

The protein belongs to the beta-defensin family. Helofensin subfamily. As to expression, expressed by the mandibular venom gland.

It localises to the secreted. Its function is as follows. Lethal toxin which possesses an inhibitory effect on direct electrical stimulation of the isolated hemi-diaphragm of mice. Neither hemorrhagic nor hemolytic activities are detected. Phospholipase A2 activity, proteolytic activity and arginine esterolytic activity are absent. This is Helofensin-3 from Heloderma suspectum cinctum (Banded Gila monster).